We begin with the raw amino-acid sequence, 191 residues long: Cyclin-dependent kinase inhibitor 1 (191 aa).

Positions 62–81 are disordered; that stretch reads LIHLEEEDKDGDTETSTYRR. The required for inhibitory function and interaction with CDK kinase complexes stretch occupies residues 162–191; the sequence is QLKEKFKKKYNFDFEKEKPLEGRYEWVKLE.

The protein belongs to the CDI family. ICK/KRP subfamily. In terms of assembly, specifically interacts with CDKA-1, but not with CDKB1-1. Interacts with CYCD2-1 and CYCD3-1. Post-translationally, ubiquitinated independently by RKP and SCF (SKP1-CUL1-FBL5/SKP2B) protein ligase complex, leading to proteasomal degradation. In terms of tissue distribution, expressed at low levels in roots, stems, leaves and flowers.

It is found in the nucleus. Its subcellular location is the nucleoplasm. Binds and inhibits CYCD2-1/CDKA-1 kinase complex activity. Regulates cell division which is crucial for plant growth, development and morphogenesis. Functions in turning cells from a mitotic to an endoreplicating cell cycle mode. Acts cell- and non-cell-autonomously to regulate endoreduplication by allowing S phase progression, but blocking entry into mitosis. Keeps on the one hand the plant cell cycle locally controlled, and on the other hand provides a possibility of linking cell cycle control in single cells with the supracellular organization of a tissue or an organ. May target specifically CDKA-1. This is Cyclin-dependent kinase inhibitor 1 (KRP1) from Arabidopsis thaliana (Mouse-ear cress).